A 275-amino-acid polypeptide reads, in one-letter code: MATYVIGDLQGCLTPLVQLLEQINYHPEQDKLWFAGDLINRGEESLETLRFIKSLGNNATVVLGNHDLHLLAVSHGYGKLKRGDTLAEILTAGDRDDLMDWLRHQPLFHYDEQLNTVMTHAGIPPCWDLQKAQTLAKEVEDKLKSDSVDEFFATMYGNKPNTWSDDLTGLDRLRAITNYLTRMRFCDENSKLDLESKEGINTATKGYAPWFNYPTKVPEDCHIVFGHWAALEGKTQKERIHALDTGCVWGGSLTALRLEDQQRFSTPCSINRKNP.

It belongs to the Ap4A hydrolase family.

The catalysed reaction is P(1),P(4)-bis(5'-adenosyl) tetraphosphate + H2O = 2 ADP + 2 H(+). Hydrolyzes diadenosine 5',5'''-P1,P4-tetraphosphate to yield ADP. The chain is Bis(5'-nucleosyl)-tetraphosphatase, symmetrical from Marinomonas sp. (strain MWYL1).